A 308-amino-acid chain; its full sequence is Oxygen-dependent coproporphyrinogen-III oxidase (308 aa).

A substrate-binding site is contributed by Ser100. A divalent metal cation contacts are provided by His104 and His114. His114 (proton donor) is an active-site residue. 116-118 (NFR) is a binding site for substrate. A divalent metal cation-binding residues include His153 and His183. An important for dimerization region spans residues 248-283 (YVEFNLVFDRGTIFGLQSGGRTESILSSMPPMATWK). Residue 266-268 (GGR) participates in substrate binding.

It belongs to the aerobic coproporphyrinogen-III oxidase family. In terms of assembly, homodimer. A divalent metal cation serves as cofactor.

It is found in the cytoplasm. It carries out the reaction coproporphyrinogen III + O2 + 2 H(+) = protoporphyrinogen IX + 2 CO2 + 2 H2O. Its pathway is porphyrin-containing compound metabolism; protoporphyrin-IX biosynthesis; protoporphyrinogen-IX from coproporphyrinogen-III (O2 route): step 1/1. In terms of biological role, involved in the heme biosynthesis. Catalyzes the aerobic oxidative decarboxylation of propionate groups of rings A and B of coproporphyrinogen-III to yield the vinyl groups in protoporphyrinogen-IX. The protein is Oxygen-dependent coproporphyrinogen-III oxidase of Francisella tularensis subsp. holarctica (strain LVS).